Reading from the N-terminus, the 346-residue chain is Histidinol-phosphate aminotransferase (346 aa).

K209 is subject to N6-(pyridoxal phosphate)lysine.

The protein belongs to the class-II pyridoxal-phosphate-dependent aminotransferase family. Histidinol-phosphate aminotransferase subfamily. As to quaternary structure, homodimer. Requires pyridoxal 5'-phosphate as cofactor.

It carries out the reaction L-histidinol phosphate + 2-oxoglutarate = 3-(imidazol-4-yl)-2-oxopropyl phosphate + L-glutamate. Its pathway is amino-acid biosynthesis; L-histidine biosynthesis; L-histidine from 5-phospho-alpha-D-ribose 1-diphosphate: step 7/9. This Vibrio cholerae serotype O1 (strain ATCC 39541 / Classical Ogawa 395 / O395) protein is Histidinol-phosphate aminotransferase.